The following is a 115-amino-acid chain: Non-specific lipid-transfer protein 4.2 (115 aa).

An N-terminal signal peptide occupies residues 1 to 25 (MARAAATQLVLVAMVAAMLIVATDA). Disulfide bonds link C29–C77, C39–C54, C55–C97, and C75–C111.

It belongs to the plant LTP family.

In terms of biological role, plant non-specific lipid-transfer proteins transfer phospholipids as well as galactolipids across membranes. May play a role in wax or cutin deposition in the cell walls of expanding epidermal cells and certain secretory tissues. The polypeptide is Non-specific lipid-transfer protein 4.2 (LTP4.2) (Hordeum vulgare (Barley)).